The sequence spans 274 residues: Large ribosomal subunit protein uL2 (274 aa).

The tract at residues 214 to 274 is disordered; it reads LGRRPRTRPV…NKYIVERRKK (61 aa).

Belongs to the universal ribosomal protein uL2 family. As to quaternary structure, part of the 50S ribosomal subunit. Forms a bridge to the 30S subunit in the 70S ribosome.

In terms of biological role, one of the primary rRNA binding proteins. Required for association of the 30S and 50S subunits to form the 70S ribosome, for tRNA binding and peptide bond formation. It has been suggested to have peptidyltransferase activity; this is somewhat controversial. Makes several contacts with the 16S rRNA in the 70S ribosome. In Flavobacterium johnsoniae (strain ATCC 17061 / DSM 2064 / JCM 8514 / BCRC 14874 / CCUG 350202 / NBRC 14942 / NCIMB 11054 / UW101) (Cytophaga johnsonae), this protein is Large ribosomal subunit protein uL2.